Reading from the N-terminus, the 432-residue chain is Interleukin-11 receptor subunit alpha-2 (432 aa).

A signal peptide spans 1 to 23; the sequence is MSSSCSGLTRVLVAVATALVSSS. Topologically, residues 24-372 are extracellular; sequence SPCPQAWGPP…DPLEQVAVLA (349 aa). Residues 27-110 form the Ig-like C2-type domain; sequence PQAWGPPGVQ…SGGMVTLKLG (84 aa). 3 cysteine pairs are disulfide-bonded: cysteine 48–cysteine 94, cysteine 120–cysteine 130, and cysteine 170–cysteine 180. 2 consecutive Fibronectin type-III domains span residues 112–219 and 220–317; these read PPAR…LRPD and PPQG…TPST. Asparagine 127 carries N-linked (GlcNAc...) asparagine glycosylation. The tract at residues 151 to 170 is disordered; sequence KTLPGAESQRESPSTGPWPC. A glycan (N-linked (GlcNAc...) asparagine) is linked at asparagine 194. A WSXWS motif motif is present at residues 304 to 308; the sequence is WSAWS. Residues 373-393 form a helical membrane-spanning segment; that stretch reads SLGIFSCLGLAVGALALGLWL. At 394 to 432 the chain is on the cytoplasmic side; sequence RLRRSGKEGPQKPGLLAPMIPVEKLPGIPNLQRTPENFS.

It belongs to the type I cytokine receptor family. Type 3 subfamily. As to quaternary structure, on ligand binding, forms a multimer complex with IL6ST/gp130. In terms of tissue distribution, expression restricted to testis, lymph node and thymus. Highest level in testis.

It is found in the membrane. Receptor for interleukin-11. The receptor systems for IL6, LIF, OSM, CNTF, IL11 and CT1 can utilize IL6ST for initiating signal transmission. The IL11/IL11RA/IL6ST complex may be involved in the control of proliferation and/or differentiation of skeletogenic progenitor or other mesenchymal cells. This Mus musculus (Mouse) protein is Interleukin-11 receptor subunit alpha-2 (Il11ra2).